The following is a 362-amino-acid chain: N5-carboxyaminoimidazole ribonucleotide synthase (362 aa).

ATP is bound by residues Arg108, Lys148, 153-159 (GYDGKGQ), 185-188 (EGFV), Glu193, His216, and 270-271 (NE). Residues 112-300 (KQFLNESGIE…QFEQHIRAVA (189 aa)) form the ATP-grasp domain.

Belongs to the PurK/PurT family. Homodimer.

The enzyme catalyses 5-amino-1-(5-phospho-beta-D-ribosyl)imidazole + hydrogencarbonate + ATP = 5-carboxyamino-1-(5-phospho-D-ribosyl)imidazole + ADP + phosphate + 2 H(+). The protein operates within purine metabolism; IMP biosynthesis via de novo pathway; 5-amino-1-(5-phospho-D-ribosyl)imidazole-4-carboxylate from 5-amino-1-(5-phospho-D-ribosyl)imidazole (N5-CAIR route): step 1/2. In terms of biological role, catalyzes the ATP-dependent conversion of 5-aminoimidazole ribonucleotide (AIR) and HCO(3)(-) to N5-carboxyaminoimidazole ribonucleotide (N5-CAIR). The protein is N5-carboxyaminoimidazole ribonucleotide synthase of Brucella melitensis biotype 1 (strain ATCC 23456 / CCUG 17765 / NCTC 10094 / 16M).